The sequence spans 523 residues: Protein nucleotidyltransferase YdiU (523 aa).

The ATP site is built by Gly-101, Gly-103, Arg-104, Lys-128, Asp-140, Gly-141, Arg-198, and Arg-205. The active-site Proton acceptor is the Asp-275. Mg(2+) is bound by residues Asn-276 and Asp-285. Asp-285 is a binding site for ATP.

Belongs to the SELO family. The cofactor is Mg(2+). Mn(2+) serves as cofactor.

The enzyme catalyses L-seryl-[protein] + ATP = 3-O-(5'-adenylyl)-L-seryl-[protein] + diphosphate. It carries out the reaction L-threonyl-[protein] + ATP = 3-O-(5'-adenylyl)-L-threonyl-[protein] + diphosphate. It catalyses the reaction L-tyrosyl-[protein] + ATP = O-(5'-adenylyl)-L-tyrosyl-[protein] + diphosphate. The catalysed reaction is L-histidyl-[protein] + UTP = N(tele)-(5'-uridylyl)-L-histidyl-[protein] + diphosphate. The enzyme catalyses L-seryl-[protein] + UTP = O-(5'-uridylyl)-L-seryl-[protein] + diphosphate. It carries out the reaction L-tyrosyl-[protein] + UTP = O-(5'-uridylyl)-L-tyrosyl-[protein] + diphosphate. Functionally, nucleotidyltransferase involved in the post-translational modification of proteins. It can catalyze the addition of adenosine monophosphate (AMP) or uridine monophosphate (UMP) to a protein, resulting in modifications known as AMPylation and UMPylation. The polypeptide is Protein nucleotidyltransferase YdiU (Aromatoleum aromaticum (strain DSM 19018 / LMG 30748 / EbN1) (Azoarcus sp. (strain EbN1))).